We begin with the raw amino-acid sequence, 217 residues long: Pyridoxine/pyridoxamine 5'-phosphate oxidase (217 aa).

Substrate-binding positions include 13 to 16 and Lys71; that span reads RREY. FMN-binding positions include 66-71, 81-82, Arg87, Lys88, and Gln110; these read RIVLLK and YT. Substrate contacts are provided by Tyr128, Arg132, and Ser136. FMN contacts are provided by residues 145–146 and Trp190; that span reads QS. 196 to 198 provides a ligand contact to substrate; the sequence is RLH. Residue Arg200 participates in FMN binding.

This sequence belongs to the pyridoxamine 5'-phosphate oxidase family. Homodimer. The cofactor is FMN.

The catalysed reaction is pyridoxamine 5'-phosphate + O2 + H2O = pyridoxal 5'-phosphate + H2O2 + NH4(+). The enzyme catalyses pyridoxine 5'-phosphate + O2 = pyridoxal 5'-phosphate + H2O2. It participates in cofactor metabolism; pyridoxal 5'-phosphate salvage; pyridoxal 5'-phosphate from pyridoxamine 5'-phosphate: step 1/1. The protein operates within cofactor metabolism; pyridoxal 5'-phosphate salvage; pyridoxal 5'-phosphate from pyridoxine 5'-phosphate: step 1/1. Its function is as follows. Catalyzes the oxidation of either pyridoxine 5'-phosphate (PNP) or pyridoxamine 5'-phosphate (PMP) into pyridoxal 5'-phosphate (PLP). The chain is Pyridoxine/pyridoxamine 5'-phosphate oxidase from Proteus mirabilis (strain HI4320).